Here is a 337-residue protein sequence, read N- to C-terminus: DNA-directed RNA polymerase subunit alpha (337 aa).

The alpha N-terminal domain (alpha-NTD) stretch occupies residues 1–231 (MRNITISAYT…KQLSVFDKIT (231 aa)). The segment at 248–337 (NTKLLQNITD…IAELKAQNEG (90 aa)) is alpha C-terminal domain (alpha-CTD).

Belongs to the RNA polymerase alpha chain family. In terms of assembly, homodimer. The RNAP catalytic core consists of 2 alpha, 1 beta, 1 beta' and 1 omega subunit. When a sigma factor is associated with the core the holoenzyme is formed, which can initiate transcription.

It carries out the reaction RNA(n) + a ribonucleoside 5'-triphosphate = RNA(n+1) + diphosphate. In terms of biological role, DNA-dependent RNA polymerase catalyzes the transcription of DNA into RNA using the four ribonucleoside triphosphates as substrates. The sequence is that of DNA-directed RNA polymerase subunit alpha from Campylobacter jejuni subsp. doylei (strain ATCC BAA-1458 / RM4099 / 269.97).